A 384-amino-acid chain; its full sequence is Putative pectate lyase 2 (384 aa).

Positions 1–23 (MASLFLTIISLLFAAFSSSVVEA) are cleaved as a signal peptide. 3 residues coordinate Ca(2+): Asp182, Asp206, and Asp210. Arg262 is a catalytic residue.

The protein belongs to the polysaccharide lyase 1 family. Ca(2+) serves as cofactor.

It carries out the reaction Eliminative cleavage of (1-&gt;4)-alpha-D-galacturonan to give oligosaccharides with 4-deoxy-alpha-D-galact-4-enuronosyl groups at their non-reducing ends.. It participates in glycan metabolism; pectin degradation; 2-dehydro-3-deoxy-D-gluconate from pectin: step 2/5. This is Putative pectate lyase 2 from Arabidopsis thaliana (Mouse-ear cress).